Reading from the N-terminus, the 586-residue chain is Exopolysaccharide phosphotransferase SCO6023 (586 aa).

It belongs to the stealth family.

The chain is Exopolysaccharide phosphotransferase SCO6023 from Streptomyces coelicolor (strain ATCC BAA-471 / A3(2) / M145).